Here is a 350-residue protein sequence, read N- to C-terminus: Methionine import ATP-binding protein MetN (350 aa).

The region spanning 2–241 (IQIKNLKKEY…PQAPVTRSFV (240 aa)) is the ABC transporter domain. 38-45 (GHSGAGKS) lines the ATP pocket.

This sequence belongs to the ABC transporter superfamily. Methionine importer (TC 3.A.1.24) family. As to quaternary structure, the complex is composed of two ATP-binding proteins (MetN), two transmembrane proteins (MetI) and a solute-binding protein (MetQ).

The protein localises to the cell inner membrane. It carries out the reaction L-methionine(out) + ATP + H2O = L-methionine(in) + ADP + phosphate + H(+). It catalyses the reaction D-methionine(out) + ATP + H2O = D-methionine(in) + ADP + phosphate + H(+). Part of the ABC transporter complex MetNIQ involved in methionine import. Responsible for energy coupling to the transport system. The polypeptide is Methionine import ATP-binding protein MetN (Francisella tularensis subsp. tularensis (strain SCHU S4 / Schu 4)).